The primary structure comprises 478 residues: tRNA(Ile)-lysidine synthase (478 aa).

27 to 32 (SGGSDS) is an ATP binding site.

Belongs to the tRNA(Ile)-lysidine synthase family.

It localises to the cytoplasm. The catalysed reaction is cytidine(34) in tRNA(Ile2) + L-lysine + ATP = lysidine(34) in tRNA(Ile2) + AMP + diphosphate + H(+). Functionally, ligates lysine onto the cytidine present at position 34 of the AUA codon-specific tRNA(Ile) that contains the anticodon CAU, in an ATP-dependent manner. Cytidine is converted to lysidine, thus changing the amino acid specificity of the tRNA from methionine to isoleucine. In Rickettsia conorii (strain ATCC VR-613 / Malish 7), this protein is tRNA(Ile)-lysidine synthase.